We begin with the raw amino-acid sequence, 508 residues long: uncharacterized protein (508 aa).

A run of 12 helical transmembrane segments spans residues 65 to 87 (IFPV…SYAV), 104 to 124 (WSGT…SLLL), 136 to 156 (FLVI…PGFI), 160 to 180 (VLLG…TAQW), 192 to 212 (VWVA…YGLA), 224 to 244 (LIFI…LAVV), 292 to 312 (TWIM…IGTF), 333 to 353 (LPAG…SLFI), 357 to 377 (MVLA…LSFA), 384 to 404 (LAGY…FAII), 416 to 436 (TVGV…PQTF), and 450 to 470 (TMVG…YVNW).

The protein belongs to the major facilitator superfamily. Allantoate permease family.

The protein localises to the endoplasmic reticulum. It localises to the golgi apparatus. It is found in the membrane. This is an uncharacterized protein from Schizosaccharomyces pombe (strain 972 / ATCC 24843) (Fission yeast).